The following is a 298-amino-acid chain: Ornithine carbamoyltransferase (298 aa).

Carbamoyl phosphate is bound by residues 50–53 (STRT), glutamine 77, arginine 101, and 128–131 (HPCQ). L-ornithine-binding positions include asparagine 159, aspartate 216, and 220–221 (SM). Carbamoyl phosphate is bound by residues 256-257 (CL) and arginine 284.

Belongs to the aspartate/ornithine carbamoyltransferase superfamily. OTCase family.

Its subcellular location is the cytoplasm. The catalysed reaction is carbamoyl phosphate + L-ornithine = L-citrulline + phosphate + H(+). The protein operates within amino-acid biosynthesis; L-arginine biosynthesis; L-arginine from L-ornithine and carbamoyl phosphate: step 1/3. In terms of biological role, reversibly catalyzes the transfer of the carbamoyl group from carbamoyl phosphate (CP) to the N(epsilon) atom of ornithine (ORN) to produce L-citrulline. The chain is Ornithine carbamoyltransferase from Methylococcus capsulatus (strain ATCC 33009 / NCIMB 11132 / Bath).